The chain runs to 345 residues: N-glycosylase/DNA lyase (345 aa).

DNA-binding residues include N149, R154, and R204. Residue K249 is the Schiff-base intermediate with DNA of the active site. 8-oxoguanine-binding residues include P266 and D268. DNA contacts are provided by H270 and Q287. Positions 315 and 319 each coordinate 8-oxoguanine. A compositionally biased stretch (basic and acidic residues) spans R324 to A334. The interval R324–G345 is disordered. The span at K335–G345 shows a compositional bias: basic residues.

Belongs to the type-1 OGG1 family. In terms of tissue distribution, ubiquitous.

It is found in the nucleus. The protein resides in the nucleoplasm. Its subcellular location is the nucleus speckle. The protein localises to the nucleus matrix. It localises to the mitochondrion. It carries out the reaction 2'-deoxyribonucleotide-(2'-deoxyribose 5'-phosphate)-2'-deoxyribonucleotide-DNA = a 3'-end 2'-deoxyribonucleotide-(2,3-dehydro-2,3-deoxyribose 5'-phosphate)-DNA + a 5'-end 5'-phospho-2'-deoxyribonucleoside-DNA + H(+). Functionally, DNA repair enzyme that incises DNA at 8-oxoG residues. Excises 7,8-dihydro-8-oxoguanine and 2,6-diamino-4-hydroxy-5-N-methylformamidopyrimidine (FAPY) from damaged DNA. Has a beta-lyase activity that nicks DNA 3' to the lesion. This Homo sapiens (Human) protein is N-glycosylase/DNA lyase (OGG1).